A 77-amino-acid chain; its full sequence is U14-theraphotoxin-Cg1c (77 aa).

An N-terminal signal peptide occupies residues 1-21; the sequence is MNTSDPPAVLRIAAITLLCTA. Residues 22–49 constitute a propeptide that is removed on maturation; sequence SESVEQNPLIPFENAVLGSYAKMASEKR. Cystine bridges form between cysteine 50–cysteine 64 and cysteine 57–cysteine 69.

Belongs to the neurotoxin 10 (Hwtx-1) family. 65 (Jztx-21) subfamily. Expressed by the venom gland.

The protein localises to the secreted. In terms of biological role, probable ion channel inhibitor. This chain is U14-theraphotoxin-Cg1c, found in Chilobrachys guangxiensis (Chinese earth tiger tarantula).